The sequence spans 355 residues: 3-dehydroquinate synthase (355 aa).

NAD(+) is bound by residues 105–109 (GVVGD), 129–130 (TS), K142, K151, and 169–172 (TLKT). E184, H246, and H263 together coordinate Zn(2+).

It belongs to the sugar phosphate cyclases superfamily. Dehydroquinate synthase family. NAD(+) serves as cofactor. The cofactor is Co(2+). It depends on Zn(2+) as a cofactor.

The protein localises to the cytoplasm. It catalyses the reaction 7-phospho-2-dehydro-3-deoxy-D-arabino-heptonate = 3-dehydroquinate + phosphate. Its pathway is metabolic intermediate biosynthesis; chorismate biosynthesis; chorismate from D-erythrose 4-phosphate and phosphoenolpyruvate: step 2/7. Catalyzes the conversion of 3-deoxy-D-arabino-heptulosonate 7-phosphate (DAHP) to dehydroquinate (DHQ). This Streptococcus agalactiae serotype III (strain NEM316) protein is 3-dehydroquinate synthase.